The primary structure comprises 284 residues: MKLVIVSGRSGSGKSVALRVLEDLGYYCVDNLPLPLIGSLLEQLKGSNDLVAISVDVRNMPEQDKVLVKQLASLPPDTELTSFFLNSSDKILLKRYSETRRLHPLSKSQVSLQEAIKLEGKLLEPMSKLVDHYIDTSNLNIYDLSDQVRQILLGSVDKELVINFESFGFKHGMPTEADFMFDVRFLPNPHWELALRPLTGLDEPVAEFLNRQPLVNKFIWQIENLLETWLPHLERNNRSYLTVAIGCTGGQHRSVYVAEQLAKRFSNGKHKVYARHRELNNAKA.

8–15 (GRSGSGKS) provides a ligand contact to ATP. 56 to 59 (DVRN) serves as a coordination point for GTP.

This sequence belongs to the RapZ-like family.

Its function is as follows. Displays ATPase and GTPase activities. This chain is Nucleotide-binding protein Sbal_3671, found in Shewanella baltica (strain OS155 / ATCC BAA-1091).